The chain runs to 95 residues: Selenoprotein K (95 aa).

Residues 20-42 (LSFITDFFWGIAEFVVLFFRTLL) form a helical membrane-spanning segment. A disordered region spans residues 47–95 (KKRRGYGSSSDSRYDDGRGPPGNPPRRRMGRINHLQGPNPPPMAGGUGR). Position 93 (U93) is a non-standard amino acid, selenocysteine.

Belongs to the selenoprotein K family. As to quaternary structure, interacts with DERL1, DERL2, DERL3 and SELENOS. The SELENOK-SELENOS complex interacts with VCP. Interacts with ZDHHC6. Post-translationally, cleaved by CAPN2/m-calpain in resting macrophages but not in activated macrophages. Macrophage activation up-regulates expression of the calpain inhibitor CAST/calpastatin, resulting in inhibition of CAPN2 activity. Truncated SELENOK proteins produced by failed UGA/Sec decoding are ubiquitinated by the CRL2(KLHDC2) complex, which recognizes the diglycine (Gly-Gly) at the C-terminus of truncated SELENOK proteins.

The protein resides in the endoplasmic reticulum membrane. The protein localises to the cell membrane. In terms of biological role, required for Ca(2+) flux in immune cells and plays a role in T-cell proliferation and in T-cell and neutrophil migration. Involved in endoplasmic reticulum-associated degradation (ERAD) of soluble glycosylated proteins. Required for palmitoylation and cell surface expression of CD36 and involved in macrophage uptake of low-density lipoprotein and in foam cell formation. Together with ZDHHC6, required for palmitoylation of ITPR1 in immune cells, leading to regulate ITPR1 stability and function. Plays a role in protection of cells from ER stress-induced apoptosis. Protects cells from oxidative stress when overexpressed in cardiomyocytes. In Bos taurus (Bovine), this protein is Selenoprotein K.